A 219-amino-acid polypeptide reads, in one-letter code: UPF0173 metal-dependent hydrolase LSL_0324 (219 aa).

The protein belongs to the UPF0173 family.

This chain is UPF0173 metal-dependent hydrolase LSL_0324, found in Ligilactobacillus salivarius (strain UCC118) (Lactobacillus salivarius).